Here is a 4351-residue protein sequence, read N- to C-terminus: Protocadherin Fat 2 (4351 aa).

A signal peptide spans 1–18; sequence MTLVLLGVAMVLLHRAAC. At 19–4050 the chain is on the extracellular side; sequence EKPLEETITP…IKRGDWGQQE (4032 aa). 2 Cadherin domains span residues 34-148 and 149-256; these read THSL…KPLF and SPPS…PPVI. N-linked (GlcNAc...) asparagine glycans are attached at residues Asn-39, Asn-210, Asn-280, and Asn-330. 31 Cadherin domains span residues 363–458, 459–564, 565–669, 716–820, 821–925, 926–1032, 1033–1142, 1138–1242, 1243–1346, 1350–1448, 1449–1555, 1556–1660, 1661–1758, 1759–1872, 1873–1968, 1969–2070, 2071–2171, 2172–2272, 2273–2379, 2380–2481, 2482–2585, 2586–2692, 2693–2799, 2800–2908, 2909–3013, 3014–3115, 3116–3220, 3221–3323, 3324–3428, 3429–3533, and 3534–3631; these read EKAV…APVF, NRSS…QPMF, EEVN…VPVQ, DHFP…PPRF, PPGG…PPQC, ITEH…SPHF, SSFV…RPVF, SRPV…SPMF, SHKL…SSIP, DESH…RPQF, LQDH…SPHF, TQPR…APIF, SKDE…APAF, LKST…PPRF, SEQI…SLQF, DQDI…IPEF, QHLP…NPLF, QSPY…PPTF, SQLV…PPEF, REPQ…SPEF, QQNV…APQF, KASG…LPKF, SEPL…RPVF, EADP…PPRF, ASED…SPQC, SQLL…APRF, FPSH…LPIF, LNSE…HPRF, THDL…PPRF, FQLN…PPST, and LPLE…APQQ. Asn-459, Asn-568, Asn-627, and Asn-789 each carry an N-linked (GlcNAc...) asparagine glycan. The N-linked (GlcNAc...) asparagine glycan is linked to Asn-996. 3 N-linked (GlcNAc...) asparagine glycosylation sites follow: Asn-1175, Asn-1276, and Asn-1417. 13 N-linked (GlcNAc...) asparagine glycosylation sites follow: Asn-1899, Asn-1998, Asn-2007, Asn-2102, Asn-2165, Asn-2183, Asn-2325, Asn-2368, Asn-2387, Asn-2430, Asn-2470, Asn-2547, and Asn-2597. 3 N-linked (GlcNAc...) asparagine glycosylation sites follow: Asn-3127, Asn-3278, and Asn-3312. 8 N-linked (GlcNAc...) asparagine glycosylation sites follow: Asn-3432, Asn-3603, Asn-3770, Asn-3774, Asn-3815, Asn-3842, Asn-3875, and Asn-3906. The Laminin G-like domain maps to 3775 to 3946; it reads GTTWRFSGQS…YLETWALSQC (172 aa). 4 cysteine pairs are disulfide-bonded: Cys-3914–Cys-3946, Cys-3953–Cys-3964, Cys-3958–Cys-3974, and Cys-3976–Cys-3985. EGF-like domains lie at 3949–3986 and 3988–4024; these read PGTT…RNCE and GREN…DRCE. The N-linked (GlcNAc...) asparagine glycan is linked to Asn-3991. 3 disulfides stabilise this stretch: Cys-3992-Cys-4003, Cys-3997-Cys-4012, and Cys-4014-Cys-4023. The chain crosses the membrane as a helical span at residues 4051–4071; sequence FLVIIVALPLLIIATVGLLLY. Topologically, residues 4072–4351 are cytoplasmic; sequence CRRCKSHKPV…DYGSCEEVMF (280 aa). A disordered region spans residues 4313–4340; it reads DCEVNGGPAPGRSQPRAPPNYEGSDMVE.

Homodimer.

It is found in the cell membrane. It localises to the cell junction. Its subcellular location is the golgi apparatus. The protein resides in the trans-Golgi network. In terms of biological role, involved in the regulation of cell migration. May be involved in mediating the organization of the parallel fibers of granule cells during cerebellar development. The protein is Protocadherin Fat 2 (Fat2) of Mus musculus (Mouse).